The primary structure comprises 621 residues: F-box/LRR-repeat protein 4 (621 aa).

R28 carries the asymmetric dimethylarginine modification. The F-box domain maps to 277-332 (NGYFDKLPYELIQLILNHLTLPDLCRLAQTCKLLSQHCCDPLQYIHLNLQPYWAKL). LRR repeat units lie at residues 376-397 (ELVR…EVIS), 402-421 (NLQA…AFNH), 427-448 (SLKR…SILN), 452-474 (ELQH…ASMI), 480-501 (KLRT…AELA), 504-524 (CPLL…STGC), 532-558 (LPNL…ACNC), 559-583 (TRLQ…LLES), and 584-609 (CKDL…LNAS).

As to quaternary structure, part of a SCF (SKP1-CUL1-F-box) protein ligase complex. Interacts with VCP. Interacts with PPTC7; this interaction promotes destruction of BNIP3 and NIX and mitophagy suppression. Expressed in heart, kidney, liver, lung, pancreas, and placenta, but not in skeletal muscle.

The protein localises to the cytoplasm. The protein resides in the nucleus. It is found in the mitochondrion outer membrane. Functionally, substrate-recognition component of the mitochondria-localized SCF-FBXL4 ubiquitin E3 ligase complex that plays a role in the restriction of mitophagy by controlling the degradation of BNIP3 and NIX mitophagy receptors. Rescues also mitochondrial injury through reverting hyperactivation of DRP1-mediated mitochondrial fission. The polypeptide is F-box/LRR-repeat protein 4 (FBXL4) (Homo sapiens (Human)).